Reading from the N-terminus, the 114-residue chain is T cell receptor beta variable 4-1 (114 aa).

The N-terminal stretch at 1–21 is a signal peptide; it reads MGCRLLCCAVLCLLGAVPIDT. Residues 22–114 enclose the Ig-like domain; that stretch reads EVTQTPKHLV…SALYLCASSQ (93 aa). Cys42 and Cys110 are joined by a disulfide. N-linked (GlcNAc...) asparagine glycosylation is found at Asn76 and Asn89.

In terms of assembly, alpha-beta TR is a heterodimer composed of an alpha and beta chain; disulfide-linked. The alpha-beta TR is associated with the transmembrane signaling CD3 coreceptor proteins to form the TR-CD3 (TcR or TCR). The assembly of alpha-beta TR heterodimers with CD3 occurs in the endoplasmic reticulum where a single alpha-beta TR heterodimer associates with one CD3D-CD3E heterodimer, one CD3G-CD3E heterodimer and one CD247 homodimer forming a stable octameric structure. CD3D-CD3E and CD3G-CD3E heterodimers preferentially associate with TR alpha and TR beta chains, respectively. The association of the CD247 homodimer is the last step of TcR assembly in the endoplasmic reticulum and is required for transport to the cell surface.

The protein resides in the cell membrane. In terms of biological role, v region of the variable domain of T cell receptor (TR) beta chain that participates in the antigen recognition. Alpha-beta T cell receptors are antigen specific receptors which are essential to the immune response and are present on the cell surface of T lymphocytes. Recognize peptide-major histocompatibility (MH) (pMH) complexes that are displayed by antigen presenting cells (APC), a prerequisite for efficient T cell adaptive immunity against pathogens. Binding of alpha-beta TR to pMH complex initiates TR-CD3 clustering on the cell surface and intracellular activation of LCK that phosphorylates the ITAM motifs of CD3G, CD3D, CD3E and CD247 enabling the recruitment of ZAP70. In turn ZAP70 phosphorylates LAT, which recruits numerous signaling molecules to form the LAT signalosome. The LAT signalosome propagates signal branching to three major signaling pathways, the calcium, the mitogen-activated protein kinase (MAPK) kinase and the nuclear factor NF-kappa-B (NF-kB) pathways, leading to the mobilization of transcription factors that are critical for gene expression and essential for T cell growth and differentiation. The T cell repertoire is generated in the thymus, by V-(D)-J rearrangement. This repertoire is then shaped by intrathymic selection events to generate a peripheral T cell pool of self-MH restricted, non-autoaggressive T cells. Post-thymic interaction of alpha-beta TR with the pMH complexes shapes TR structural and functional avidity. This is T cell receptor beta variable 4-1 from Homo sapiens (Human).